The primary structure comprises 260 residues: Thymidylate synthase (260 aa).

The protein operates within pyrimidine metabolism; dTTP biosynthesis. In terms of biological role, is able to catalyze the biosynthesis of dTMP using dUMP, tetrahydrofolate and formaldehyde in vitro, i.e. a reaction equivalent to that catalyzed by bacterial thymidylate synthases (EC 2.1.1.45). However, M.jannaschii like most methanogenic Archaea lacks folates, thus the physiological cosubstrate is unknown but is likely one of the non-methylated methanopterin biosynthetic intermediates. The protein is Thymidylate synthase of Methanocaldococcus jannaschii (strain ATCC 43067 / DSM 2661 / JAL-1 / JCM 10045 / NBRC 100440) (Methanococcus jannaschii).